Consider the following 208-residue polypeptide: Receptor expression-enhancing protein 6 (208 aa).

Helical transmembrane passes span 49-69, 93-113, and 115-135; these read GAFL…GFVY, WVIY…LHWF, and FYYV…SWNG. Positions 187–208 are disordered; it reads VGPAESEPRSLPSSAHTEPTVD. Polar residues predominate over residues 197 to 208; sequence LPSSAHTEPTVD.

Belongs to the DP1 family.

Its subcellular location is the endoplasmic reticulum membrane. The protein resides in the cytoplasmic vesicle. The protein localises to the clathrin-coated vesicle membrane. In terms of biological role, required correct function and survival of retinal photoreceptors. Required for retinal development. In rod photoreceptors, facilitates stability and/or trafficking of guanylate cyclases and is required to maintain endoplasmic reticulum and mitochondrial homeostasis. May play a role in clathrin-coated intracellular vesicle trafficking of proteins from the endoplasmic reticulum to the retinal rod plasma membrane. The sequence is that of Receptor expression-enhancing protein 6 from Danio rerio (Zebrafish).